We begin with the raw amino-acid sequence, 383 residues long: Deoxyuridylate hydroxymethyltransferase (383 aa).

Residue C162 is part of the active site.

Belongs to the thymidylate synthase family. Homodimer.

The catalysed reaction is dUMP + (6R)-5,10-methylene-5,6,7,8-tetrahydrofolate + H2O = 5-hydroxymethyl-dUMP + (6S)-5,6,7,8-tetrahydrofolate. Functionally, catalyzes formation of 5-hydroxymethyldeoxyuridylate (5HMdUMP) as a step in the pathway that replaces dTMP by thymidine hypermodifications in the viral genome. As a final result of the pathway of hypermodification, hydroxymethyluracil substitutes for a subset of thymidines in the viral DNA. These modifications probably prevent degradation of viral DNA by the host restriction-modification antiviral defense system. The protein is Deoxyuridylate hydroxymethyltransferase of Bacillus subtilis (Bacteriophage SP01).